We begin with the raw amino-acid sequence, 432 residues long: Enolase (432 aa).

Gln166 is a (2R)-2-phosphoglycerate binding site. Catalysis depends on Glu208, which acts as the Proton donor. Mg(2+) contacts are provided by Asp245, Glu291, and Asp318. Residues Lys343, Arg372, Ser373, and Lys394 each coordinate (2R)-2-phosphoglycerate. The active-site Proton acceptor is the Lys343.

Belongs to the enolase family. The cofactor is Mg(2+).

It is found in the cytoplasm. The protein localises to the secreted. It localises to the cell surface. It catalyses the reaction (2R)-2-phosphoglycerate = phosphoenolpyruvate + H2O. It participates in carbohydrate degradation; glycolysis; pyruvate from D-glyceraldehyde 3-phosphate: step 4/5. Functionally, catalyzes the reversible conversion of 2-phosphoglycerate (2-PG) into phosphoenolpyruvate (PEP). It is essential for the degradation of carbohydrates via glycolysis. This is Enolase from Leptospira borgpetersenii serovar Hardjo-bovis (strain L550).